A 584-amino-acid chain; its full sequence is DNA mismatch repair protein MutL (584 aa).

This sequence belongs to the DNA mismatch repair MutL/HexB family.

Functionally, this protein is involved in the repair of mismatches in DNA. It is required for dam-dependent methyl-directed DNA mismatch repair. May act as a 'molecular matchmaker', a protein that promotes the formation of a stable complex between two or more DNA-binding proteins in an ATP-dependent manner without itself being part of a final effector complex. The sequence is that of DNA mismatch repair protein MutL from Syntrophomonas wolfei subsp. wolfei (strain DSM 2245B / Goettingen).